A 298-amino-acid chain; its full sequence is Probable mitochondrial 2-oxodicarboxylate carrier (298 aa).

6 helical membrane-spanning segments follow: residues 6–26 (IPFP…VLTL), 62–81 (HRLY…KRAL), 105–125 (ALSI…VVPF), 159–179 (ALYN…AGYF), 203–223 (LIAG…FDVI), and 267–287 (VLRL…VIEF). 3 Solcar repeats span residues 6–92 (IPFP…YSKL), 102–188 (SSPA…IRNS), and 197–287 (GEIR…VIEF).

Belongs to the mitochondrial carrier (TC 2.A.29) family.

The protein localises to the mitochondrion inner membrane. Its function is as follows. Transports C5-C7 oxodicarboxylates across the inner membranes of mitochondria. This Schizosaccharomyces pombe (strain 972 / ATCC 24843) (Fission yeast) protein is Probable mitochondrial 2-oxodicarboxylate carrier.